We begin with the raw amino-acid sequence, 531 residues long: MSLAAYCVICCRRVGTSTSPPKSGTRWRDIRNIIKFTGSLILGGSLFLTYEVLALKKAVTLDTQVVEREKMKSYIYVHTVSLDKGENHGIAWQARKELHKAVRKVLATSAKILRNPFADPFSTVDIEDHECAVWLLLRKSKSDDKTTRLEAVQEMSEAHHWHDYQYRLIAQACDPKTLIGLARSKESDLRFFLLPPPLPSLKEDSSTEEELRQLLASLPQTELDECIQYFTSLALSESSQSLAAQKGGLWCFGGNGLPYAESFGEVPSATVEMFCLEAIVKHSEISTHCDKIEANGGLQLLQRLYQLHKDCPKVQRNIMRIIGNMALNEHLHSSIVRSGWVSIMAEAMKSDRIMEASHAARILANLDRETVQEKYQDGVYVLHPQYRTSRPIKADVLFIHGLMGAAFKTWRQQDSEQAVIEKPMEEEDRYTTCWPKTWLAKDCPALRIISVEYDTTLSDWRARCPMERRSLLSISSGIGEVLESPLHSEATNFLGSSELLVLGIGRWFGYHIAWEVFSSKRCCWKPLRSQK.

Residues 33 to 50 (IIKFTGSLILGGSLFLTY) traverse the membrane as a helical segment.

It belongs to the SERAC1 family.

It is found in the mitochondrion membrane. The protein resides in the endoplasmic reticulum. The protein localises to the mitochondrion. Its function is as follows. Facilitates the transport of serine from the cytosol to the mitochondria by interacting with and stabilizing Sideroflexin-1 (SFXN1), a mitochondrial serine transporter, playing a fundamental role in the one-carbon cycle responsible for the synthesis of nucleotides needed for mitochondrial DNA replication. Plays an important role in the phosphatidylglycerol (PG) remodeling that is essential for both mitochondrial function and intracellular cholesterol trafficking. Specifically involved in the exchange of the sn-1 acyl chain from PG 16:0/18:1(9Z) (also known as 1-hexadecanoyl-2-(9Z-octadecenoyl)-sn-glycero-3-phospho-(1'-sn-glycerol)) to PG 18:0/18:1(9Z) (also known as 1-octadecanoyl-2-(9Z-octadecenoyl)-sn-glycero-3-phospho-(1'-sn-glycerol)), a step needed in the bis(monoacylglycerol)phosphate biosynthetic pathway. May have acyltransferase activity although the mechanism for PG remodeling has not been determined. In Macaca fascicularis (Crab-eating macaque), this protein is Protein SERAC1 (SERAC1).